The primary structure comprises 216 residues: Probable nicotinate-nucleotide adenylyltransferase (216 aa).

The protein belongs to the NadD family.

It carries out the reaction nicotinate beta-D-ribonucleotide + ATP + H(+) = deamido-NAD(+) + diphosphate. It participates in cofactor biosynthesis; NAD(+) biosynthesis; deamido-NAD(+) from nicotinate D-ribonucleotide: step 1/1. In terms of biological role, catalyzes the reversible adenylation of nicotinate mononucleotide (NaMN) to nicotinic acid adenine dinucleotide (NaAD). The chain is Probable nicotinate-nucleotide adenylyltransferase from Buchnera aphidicola subsp. Schizaphis graminum (strain Sg).